We begin with the raw amino-acid sequence, 206 residues long: Translation initiation factor IF-3 (206 aa).

It belongs to the IF-3 family. As to quaternary structure, monomer.

It localises to the cytoplasm. In terms of biological role, IF-3 binds to the 30S ribosomal subunit and shifts the equilibrium between 70S ribosomes and their 50S and 30S subunits in favor of the free subunits, thus enhancing the availability of 30S subunits on which protein synthesis initiation begins. The protein is Translation initiation factor IF-3 of Chlorobium luteolum (strain DSM 273 / BCRC 81028 / 2530) (Pelodictyon luteolum).